A 244-amino-acid polypeptide reads, in one-letter code: Uridylate kinase (244 aa).

K15–G18 lines the ATP pocket. Residues G23–G28 are involved in allosteric activation by GTP. G57 is a binding site for UMP. 2 residues coordinate ATP: G58 and R62. Residues D77 and T138–T145 contribute to the UMP site. Positions 165, 171, and 174 each coordinate ATP.

It belongs to the UMP kinase family. In terms of assembly, homohexamer.

The protein localises to the cytoplasm. It catalyses the reaction UMP + ATP = UDP + ADP. It participates in pyrimidine metabolism; CTP biosynthesis via de novo pathway; UDP from UMP (UMPK route): step 1/1. Its activity is regulated as follows. Allosterically activated by GTP. Inhibited by UTP. In terms of biological role, catalyzes the reversible phosphorylation of UMP to UDP. This chain is Uridylate kinase, found in Aeromonas salmonicida (strain A449).